Here is a 206-residue protein sequence, read N- to C-terminus: Protein GrpE (206 aa).

Belongs to the GrpE family. Homodimer.

Its subcellular location is the cytoplasm. Its function is as follows. Participates actively in the response to hyperosmotic and heat shock by preventing the aggregation of stress-denatured proteins, in association with DnaK and GrpE. It is the nucleotide exchange factor for DnaK and may function as a thermosensor. Unfolded proteins bind initially to DnaJ; upon interaction with the DnaJ-bound protein, DnaK hydrolyzes its bound ATP, resulting in the formation of a stable complex. GrpE releases ADP from DnaK; ATP binding to DnaK triggers the release of the substrate protein, thus completing the reaction cycle. Several rounds of ATP-dependent interactions between DnaJ, DnaK and GrpE are required for fully efficient folding. This is Protein GrpE from Psychromonas ingrahamii (strain DSM 17664 / CCUG 51855 / 37).